The primary structure comprises 430 residues: MDRIRIVGGNELNGIIPISGAKNAALPLMIASLLTSDTLTLENVPHLADVELLMRILGNHGVDVAVNGRRERQEDSYARTIHFTCRTIVDTTASYELVSKMRASFWVIGPLLAREGHCRVSLPGGCAIGTRPVDLFIEGLTALGATMEIDAGYINAKAPDGGLIGARYTFPKVSVGATHVMMMAATLARGTTVIGNAAREPEVVDLANCLNAMGAKISGAGTATITIEGVTSLSGARHRVLPDRIETGTYAMAVAMAGGDVVLENTDVALLETAVETLRRAGADISATNNGMRIKRNGAGIKPVDIVTDPFPGFPTDLQAQFMALMTRSSGISHVTETIFENRFMHVQELARLGARITLSGQTAKIEGVQRLRGAPVMATDLRASVSLVIAGLAAEGETTVSRVYHLDRGFERLEEKLTRCGAVVQRISE.

Position 22–23 (22–23 (KN)) interacts with phosphoenolpyruvate. Arg-102 is a UDP-N-acetyl-alpha-D-glucosamine binding site. The active-site Proton donor is the Cys-126. 2-(S-cysteinyl)pyruvic acid O-phosphothioketal is present on Cys-126. Residues 131–135 (RPVDL), 172–175 (KVSV), Asp-317, and Ile-339 each bind UDP-N-acetyl-alpha-D-glucosamine.

It belongs to the EPSP synthase family. MurA subfamily.

It is found in the cytoplasm. The catalysed reaction is phosphoenolpyruvate + UDP-N-acetyl-alpha-D-glucosamine = UDP-N-acetyl-3-O-(1-carboxyvinyl)-alpha-D-glucosamine + phosphate. Its pathway is cell wall biogenesis; peptidoglycan biosynthesis. Functionally, cell wall formation. Adds enolpyruvyl to UDP-N-acetylglucosamine. This chain is UDP-N-acetylglucosamine 1-carboxyvinyltransferase, found in Rhizobium etli (strain CIAT 652).